A 120-amino-acid chain; its full sequence is Large ribosomal subunit protein uL18 (120 aa).

This sequence belongs to the universal ribosomal protein uL18 family. Part of the 50S ribosomal subunit; part of the 5S rRNA/L5/L18/L25 subcomplex. Contacts the 5S and 23S rRNAs.

In terms of biological role, this is one of the proteins that bind and probably mediate the attachment of the 5S RNA into the large ribosomal subunit, where it forms part of the central protuberance. This chain is Large ribosomal subunit protein uL18, found in Bartonella quintana (strain Toulouse) (Rochalimaea quintana).